Consider the following 158-residue polypeptide: Protein-export protein SecB (158 aa).

It belongs to the SecB family. As to quaternary structure, homotetramer, a dimer of dimers. One homotetramer interacts with 1 SecA dimer.

The protein resides in the cytoplasm. In terms of biological role, one of the proteins required for the normal export of preproteins out of the cell cytoplasm. It is a molecular chaperone that binds to a subset of precursor proteins, maintaining them in a translocation-competent state. It also specifically binds to its receptor SecA. The protein is Protein-export protein SecB of Yersinia pestis (strain Pestoides F).